Here is a 155-residue protein sequence, read N- to C-terminus: Small ribosomal subunit protein uS9 (155 aa).

The protein belongs to the universal ribosomal protein uS9 family.

The chain is Small ribosomal subunit protein uS9 from Rhizobium meliloti (strain 1021) (Ensifer meliloti).